Here is a 342-residue protein sequence, read N- to C-terminus: MEHQVRCAVLGLGRLGYYHAKNLVTSVPGAKLVCVGDPLKGRAEQVARELGIEKWSEDPYEVLEDPGIDAVIIVTPTSTHGDMIIKAAENGKQIFVEKPLTLSLEESKAASEKVKETGVICQVGFMRRFDPAYADAKRRIDAGEIGKPIYYKGFTRDQGAPPAEFIKHSGGIFIDCSIHDYDIARYLLGAEITSVSGHGRILNNPFMEQYGDVDQALTYIEFDSGAAGDVEASRTSPYGHDIRAEVIGTEGSIFIGTLRHQHVTILSAKGSSFDIIPDFQTRFHEAYCLELQHFAECVRNGKTPIVTDIDATINLEVGIAATNSFRNGMPVQLDVKRAYTGM.

The protein belongs to the Gfo/Idh/MocA family.

The enzyme catalyses scyllo-inositol + NAD(+) = scyllo-inosose + NADH + H(+). It participates in polyol metabolism. Catalyzes the reversible NAD(+)-dependent oxidation of scyllo-inositol (SI) to 2,4,6/3,5-pentahydroxycyclohexanone (scyllo-inosose or SIS). Is required for SI catabolism that allows B.subtilis to utilize SI as the sole carbon source for growth. Cannot use NADP(+) instead of NAD(+). The chain is scyllo-inositol 2-dehydrogenase (NAD(+)) from Bacillus subtilis (strain 168).